The following is a 154-amino-acid chain: Photosystem II extrinsic protein U, chloroplastic (154 aa).

The N-terminal 36 residues, 1-36, are a transit peptide targeting the chloroplast; sequence MAFISTPLGKVTVKSATVSANRRGLRMQSDSEPVVS. A thylakoid-targeting transit peptide spans 37–61; it reads RRALLSGALAAAVAAALARARPAQA.

This sequence belongs to the PsbU family. As to quaternary structure, PSII is composed of 1 copy each of membrane proteins PsbA, PsbB, PsbC, PsbD, PsbE, PsbF, PsbH, PsbI, PsbJ, PsbK, PsbL, PsbM, PsbT, PsbY, PsbZ, Psb30/Ycf12, at least 3 peripheral proteins of the oxygen-evolving complex and a large number of cofactors. It forms dimeric complexes. The extrinsic subunits in red algae are PsbO (OEC33), PsbQ', cytochrome c-550 and PsbU. Predicted to be translocated into the thylakoid lumen by the Tat system. The position of the first transit peptide cleavage has not been experimentally proven.

The protein localises to the plastid. It localises to the chloroplast thylakoid membrane. One of the extrinsic, lumenal subunits of photosystem II (PSII). PSII is a light-driven water plastoquinone oxidoreductase, using light energy to abstract electrons from H(2)O, generating a proton gradient subsequently used for ATP formation. The extrinsic proteins stabilize the structure of photosystem II oxygen-evolving complex (OEC), the ion environment of oxygen evolution and protect the OEC against heat-induced inactivation. The protein is Photosystem II extrinsic protein U, chloroplastic of Cyanidium caldarium (Red alga).